A 296-amino-acid chain; its full sequence is F-box only protein 2 (296 aa).

Residues 1–41 (MDGDGDPESVGQPEEASPEEQPEEASAEEERPEDQQEEEAA) are disordered. Residues 16 to 40 (ASPEEQPEEASAEEERPEDQQEEEA) are compositionally biased toward acidic residues. The F-box domain occupies 44 to 91 (AAYLDELPEPLLLRVLAALPAAELVQACRLVCLRWKELVDGAPLWLLK). The region spanning 113–296 (FYFLSKRRRN…VTNSSVWVEP (184 aa)) is the FBA domain. Residues 210 to 212 (RSD) and 278 to 279 (YW) each bind a carbohydrate.

As to quaternary structure, component of the SCF(FBXO2) complex consisting of CUL1, RBX1, SKP1 and FBXO2. Predominantly detected as heterodimer with SKP1; the heterodimer with SKP1 is not part of the SCF(FBXO2) complex.

It localises to the cytoplasm. The protein resides in the microsome membrane. It functions in the pathway protein modification; protein ubiquitination. Its function is as follows. Substrate recognition component of a SCF (SKP1-CUL1-F-box protein) E3 ubiquitin-protein ligase complex that mediates the ubiquitination and subsequent proteasomal degradation of target proteins. Involved in the endoplasmic reticulum-associated degradation pathway (ERAD) for misfolded lumenal proteins by recognizing and binding sugar chains on unfolded glycoproteins that are retrotranslocated into the cytosol and promoting their ubiquitination and subsequent degradation. Prevents formation of cytosolic aggregates of unfolded glycoproteins that have been retrotranslocated into the cytosol. Able to recognize and bind denatured glycoproteins, preferentially those of the high-mannose type. The chain is F-box only protein 2 (FBXO2) from Homo sapiens (Human).